The sequence spans 266 residues: Transcription regulator FGM4 (266 aa).

The interval 17 to 36 (KTQNRLAKRKSRIHAGKQQG) is disordered. Positions 18 to 31 (TQNRLAKRKSRIHA) are enriched in basic residues. 2 ANK repeats span residues 183 to 212 (KPGS…NVNE) and 216 to 245 (AGYS…DWSY).

The protein localises to the nucleus. Transcription regulator; part of the Fg3_54/C64 gene cluster that mediates the biosynthesis of the octapeptide fusaoctaxin A, a virulence factor that is required for cell-to-cell invasiveness of plant host. Positively regulates the expression the Fg3_54/C64 gene cluster. The protein is Transcription regulator FGM4 of Gibberella zeae (strain ATCC MYA-4620 / CBS 123657 / FGSC 9075 / NRRL 31084 / PH-1) (Wheat head blight fungus).